We begin with the raw amino-acid sequence, 734 residues long: Photosystem I P700 chlorophyll a apoprotein A2 (734 aa).

8 helical membrane passes run 46–69, 135–158, 175–199, 273–291, 330–353, 369–395, 417–439, and 517–535; these read IFAS…FHVA, LYTG…LHLQ, LNHH…HVAI, IAHH…GHMY, IHFQ…QHMY, AALY…IFFI, AIIS…LYVH, and FLVH…LILV. [4Fe-4S] cluster contacts are provided by Cys-559 and Cys-568. Transmembrane regions (helical) follow at residues 575 to 596 and 643 to 665; these read AFYL…YWHW and LSVW…MFLI. Positions 654, 662, and 670 each coordinate chlorophyll a. Residue Trp-671 coordinates phylloquinone. Residues 707–727 traverse the membrane as a helical segment; it reads LVGLAHFSVGYIFTYAAFLIA.

The protein belongs to the PsaA/PsaB family. As to quaternary structure, the PsaA/B heterodimer binds the P700 chlorophyll special pair and subsequent electron acceptors. PSI consists of a core antenna complex that captures photons, and an electron transfer chain that converts photonic excitation into a charge separation. The eukaryotic PSI reaction center is composed of at least 11 subunits. P700 is a chlorophyll a/chlorophyll a' dimer, A0 is one or more chlorophyll a, A1 is one or both phylloquinones and FX is a shared 4Fe-4S iron-sulfur center. serves as cofactor.

The protein resides in the plastid. The protein localises to the chloroplast thylakoid membrane. It catalyses the reaction reduced [plastocyanin] + hnu + oxidized [2Fe-2S]-[ferredoxin] = oxidized [plastocyanin] + reduced [2Fe-2S]-[ferredoxin]. In terms of biological role, psaA and PsaB bind P700, the primary electron donor of photosystem I (PSI), as well as the electron acceptors A0, A1 and FX. PSI is a plastocyanin-ferredoxin oxidoreductase, converting photonic excitation into a charge separation, which transfers an electron from the donor P700 chlorophyll pair to the spectroscopically characterized acceptors A0, A1, FX, FA and FB in turn. Oxidized P700 is reduced on the lumenal side of the thylakoid membrane by plastocyanin. The chain is Photosystem I P700 chlorophyll a apoprotein A2 from Calycanthus floridus var. glaucus (Eastern sweetshrub).